The following is a 218-amino-acid chain: Large ribosomal subunit protein uL3 (218 aa).

The tract at residues glycine 127–glycine 167 is disordered.

The protein belongs to the universal ribosomal protein uL3 family. As to quaternary structure, part of the 50S ribosomal subunit. Forms a cluster with proteins L14 and L19.

Functionally, one of the primary rRNA binding proteins, it binds directly near the 3'-end of the 23S rRNA, where it nucleates assembly of the 50S subunit. This is Large ribosomal subunit protein uL3 from Prochlorococcus marinus (strain MIT 9303).